Here is a 631-residue protein sequence, read N- to C-terminus: Phosphomethylpyrimidine synthase (631 aa).

Substrate contacts are provided by residues Asn-239, Met-268, Tyr-297, His-333, 353–355 (SRG), 394–397 (DGLR), and Glu-433. His-437 serves as a coordination point for Zn(2+). Tyr-460 contacts substrate. Zn(2+) is bound at residue His-501. [4Fe-4S] cluster-binding residues include Cys-581, Cys-584, and Cys-589.

It belongs to the ThiC family. In terms of assembly, homodimer. [4Fe-4S] cluster is required as a cofactor.

The catalysed reaction is 5-amino-1-(5-phospho-beta-D-ribosyl)imidazole + S-adenosyl-L-methionine = 4-amino-2-methyl-5-(phosphooxymethyl)pyrimidine + CO + 5'-deoxyadenosine + formate + L-methionine + 3 H(+). The protein operates within cofactor biosynthesis; thiamine diphosphate biosynthesis. Its function is as follows. Catalyzes the synthesis of the hydroxymethylpyrimidine phosphate (HMP-P) moiety of thiamine from aminoimidazole ribotide (AIR) in a radical S-adenosyl-L-methionine (SAM)-dependent reaction. The sequence is that of Phosphomethylpyrimidine synthase from Escherichia coli O157:H7.